We begin with the raw amino-acid sequence, 78 residues long: Probable [Fe-S]-dependent transcriptional repressor (78 aa).

Residues Cys-56, Cys-61, Cys-64, and Cys-70 each coordinate iron-sulfur cluster.

This sequence belongs to the FeoC family.

Its function is as follows. May function as a transcriptional regulator that controls feoABC expression. The sequence is that of Probable [Fe-S]-dependent transcriptional repressor from Escherichia fergusonii (strain ATCC 35469 / DSM 13698 / CCUG 18766 / IAM 14443 / JCM 21226 / LMG 7866 / NBRC 102419 / NCTC 12128 / CDC 0568-73).